A 388-amino-acid chain; its full sequence is Chorismate synthase (388 aa).

Residues R40 and R46 each coordinate NADP(+). Residues 131–133 (RSS), 252–253 (NA), G296, 311–315 (KPIPT), and R337 each bind FMN.

The protein belongs to the chorismate synthase family. In terms of assembly, homotetramer. It depends on FMNH2 as a cofactor.

It catalyses the reaction 5-O-(1-carboxyvinyl)-3-phosphoshikimate = chorismate + phosphate. The protein operates within metabolic intermediate biosynthesis; chorismate biosynthesis; chorismate from D-erythrose 4-phosphate and phosphoenolpyruvate: step 7/7. Its function is as follows. Catalyzes the anti-1,4-elimination of the C-3 phosphate and the C-6 proR hydrogen from 5-enolpyruvylshikimate-3-phosphate (EPSP) to yield chorismate, which is the branch point compound that serves as the starting substrate for the three terminal pathways of aromatic amino acid biosynthesis. This reaction introduces a second double bond into the aromatic ring system. In Limosilactobacillus fermentum (strain NBRC 3956 / LMG 18251) (Lactobacillus fermentum), this protein is Chorismate synthase.